Consider the following 130-residue polypeptide: Ribonuclease P protein component 2 (130 aa).

Belongs to the eukaryotic/archaeal RNase P protein component 2 family. Consists of a catalytic RNA component and at least 4-5 protein subunits.

The protein resides in the cytoplasm. It catalyses the reaction Endonucleolytic cleavage of RNA, removing 5'-extranucleotides from tRNA precursor.. Part of ribonuclease P, a protein complex that generates mature tRNA molecules by cleaving their 5'-ends. This is Ribonuclease P protein component 2 from Methanococcus maripaludis (strain C5 / ATCC BAA-1333).